Here is a 361-residue protein sequence, read N- to C-terminus: NAD(P)H-quinone oxidoreductase subunit 1, chloroplastic (361 aa).

The next 6 membrane-spanning stretches (helical) occupy residues 25–45 (IWLLVPILTLVLGITIGVLVI), 102–122 (VAVVSILLSYSVIPFGYHLVL), 125–145 (LSIGVFLWIAISSIAPIGLLM), 246–266 (YSGIKFGLFYVASYLNLLVSS), 298–318 (VFGTTISLLITLAKAYLFLFI), and 334–354 (LLNLGWKSLLPIALGNLLLTT).

The protein belongs to the complex I subunit 1 family. As to quaternary structure, NDH is composed of at least 16 different subunits, 5 of which are encoded in the nucleus.

The protein resides in the plastid. The protein localises to the chloroplast thylakoid membrane. It carries out the reaction a plastoquinone + NADH + (n+1) H(+)(in) = a plastoquinol + NAD(+) + n H(+)(out). The catalysed reaction is a plastoquinone + NADPH + (n+1) H(+)(in) = a plastoquinol + NADP(+) + n H(+)(out). In terms of biological role, NDH shuttles electrons from NAD(P)H:plastoquinone, via FMN and iron-sulfur (Fe-S) centers, to quinones in the photosynthetic chain and possibly in a chloroplast respiratory chain. The immediate electron acceptor for the enzyme in this species is believed to be plastoquinone. Couples the redox reaction to proton translocation, and thus conserves the redox energy in a proton gradient. The protein is NAD(P)H-quinone oxidoreductase subunit 1, chloroplastic of Nymphaea alba (White water-lily).